The chain runs to 314 residues: Vomeronasal type-1 receptor 98 (314 aa).

Over 1-19 (MNKDTTMYCSAYIRDVFFC) the chain is Extracellular. Residues 20–40 (EIGVGISANSCLLLFHIFMFI) traverse the membrane as a helical segment. Over 41–49 (RGHRPRLTD) the chain is Cytoplasmic. The chain crosses the membrane as a helical span at residues 50–70 (LPIGLMALIHLLMLLLAAYIA). Residues 71–92 (KDFFMSSGWDDITCKLFIFLHR) lie on the Extracellular side of the membrane. A disulfide bridge connects residues C84 and C171. A helical membrane pass occupies residues 93 to 113 (FFRSLSVCATCMLSVFQTIIL). Topologically, residues 114 to 133 (CPQSSHLAKFKPNSPYHLSC) are cytoplasmic. A helical transmembrane segment spans residues 134 to 154 (FFIFMSIFYTSISSHILIAAI). Over 155 to 186 (ATQNLTSVNLIYITKSCSFLPMSSSMQRTFST) the chain is Extracellular. The N-linked (GlcNAc...) asparagine glycan is linked to N158. Residues 187–207 (LLAFRNAFLIGLMGLSTCYMA) traverse the membrane as a helical segment. Topologically, residues 208–235 (TLLCRHKTRSQRLQNSKLSPKATPEQRA) are cytoplasmic. A helical membrane pass occupies residues 236–256 (IWTLLMFMSFFLVMSTFDSII). Over 257–268 (SYSRTIFQGNPS) the chain is Extracellular. Residues 269–289 (LYCAQILVAHSYAVVSPMLVL) traverse the membrane as a helical segment. At 290–314 (SNENRLTNPLISMYERIVRLDFLCW) the chain is on the cytoplasmic side.

Belongs to the G-protein coupled receptor 1 family.

The protein localises to the cell membrane. Putative pheromone receptor implicated in the regulation of social as well as reproductive behavior. The chain is Vomeronasal type-1 receptor 98 (Vom1r98) from Rattus norvegicus (Rat).